The primary structure comprises 57 residues: UPF0391 membrane protein Smed_4051 (57 aa).

The next 2 membrane-spanning stretches (helical) occupy residues 4-24 (WALI…SGIS) and 33-53 (ILFY…LAVG).

The protein belongs to the UPF0391 family.

It localises to the cell membrane. The chain is UPF0391 membrane protein Smed_4051 from Sinorhizobium medicae (strain WSM419) (Ensifer medicae).